A 734-amino-acid chain; its full sequence is Photosystem I P700 chlorophyll a apoprotein A2 (734 aa).

8 helical membrane-spanning segments follow: residues 46-69 (IFAS…FHVA), 135-158 (LYTG…LHLQ), 175-199 (LNHH…HVAI), 273-291 (MAHH…GHMY), 330-353 (LHFQ…QHMY), 369-395 (SALY…IFFI), 417-439 (ALIS…LYVH), and 517-535 (FLVH…LILV). Positions 559 and 568 each coordinate [4Fe-4S] cluster. The next 2 helical transmembrane spans lie at 575-596 (AFYL…YWHW) and 643-665 (LSVW…MFLI). 3 residues coordinate chlorophyll a: His-654, Met-662, and Tyr-670. Trp-671 provides a ligand contact to phylloquinone. The chain crosses the membrane as a helical span at residues 707–727 (LVGLAHFSVGYVFTYAAFVIA).

It belongs to the PsaA/PsaB family. The PsaA/B heterodimer binds the P700 chlorophyll special pair and subsequent electron acceptors. PSI consists of a core antenna complex that captures photons, and an electron transfer chain that converts photonic excitation into a charge separation. The eukaryotic PSI reaction center is composed of at least 11 subunits. P700 is a chlorophyll a/chlorophyll a' dimer, A0 is one or more chlorophyll a, A1 is one or both phylloquinones and FX is a shared 4Fe-4S iron-sulfur center. serves as cofactor.

It localises to the plastid. Its subcellular location is the chloroplast thylakoid membrane. The enzyme catalyses reduced [plastocyanin] + hnu + oxidized [2Fe-2S]-[ferredoxin] = oxidized [plastocyanin] + reduced [2Fe-2S]-[ferredoxin]. Functionally, psaA and PsaB bind P700, the primary electron donor of photosystem I (PSI), as well as the electron acceptors A0, A1 and FX. PSI is a plastocyanin/cytochrome c6-ferredoxin oxidoreductase, converting photonic excitation into a charge separation, which transfers an electron from the donor P700 chlorophyll pair to the spectroscopically characterized acceptors A0, A1, FX, FA and FB in turn. Oxidized P700 is reduced on the lumenal side of the thylakoid membrane by plastocyanin or cytochrome c6. This chain is Photosystem I P700 chlorophyll a apoprotein A2, found in Nephroselmis olivacea (Green alga).